The chain runs to 286 residues: Bifunctional protein FolD (286 aa).

NADP(+) is bound by residues 165-167 (GRS), serine 190, and valine 231.

The protein belongs to the tetrahydrofolate dehydrogenase/cyclohydrolase family. In terms of assembly, homodimer.

It carries out the reaction (6R)-5,10-methylene-5,6,7,8-tetrahydrofolate + NADP(+) = (6R)-5,10-methenyltetrahydrofolate + NADPH. It catalyses the reaction (6R)-5,10-methenyltetrahydrofolate + H2O = (6R)-10-formyltetrahydrofolate + H(+). The protein operates within one-carbon metabolism; tetrahydrofolate interconversion. Functionally, catalyzes the oxidation of 5,10-methylenetetrahydrofolate to 5,10-methenyltetrahydrofolate and then the hydrolysis of 5,10-methenyltetrahydrofolate to 10-formyltetrahydrofolate. The polypeptide is Bifunctional protein FolD (Bacillus cytotoxicus (strain DSM 22905 / CIP 110041 / 391-98 / NVH 391-98)).